Consider the following 259-residue polypeptide: tRNA-cytidine(32) 2-sulfurtransferase (259 aa).

The PP-loop motif signature appears at Ser-40–Ser-45. Residues Cys-114, Cys-117, and Cys-205 each coordinate [4Fe-4S] cluster.

Belongs to the TtcA family. Homodimer. It depends on Mg(2+) as a cofactor. [4Fe-4S] cluster is required as a cofactor.

The protein resides in the cytoplasm. It catalyses the reaction cytidine(32) in tRNA + S-sulfanyl-L-cysteinyl-[cysteine desulfurase] + AH2 + ATP = 2-thiocytidine(32) in tRNA + L-cysteinyl-[cysteine desulfurase] + A + AMP + diphosphate + H(+). It functions in the pathway tRNA modification. Catalyzes the ATP-dependent 2-thiolation of cytidine in position 32 of tRNA, to form 2-thiocytidine (s(2)C32). The sulfur atoms are provided by the cysteine/cysteine desulfurase (IscS) system. The chain is tRNA-cytidine(32) 2-sulfurtransferase from Bdellovibrio bacteriovorus (strain ATCC 15356 / DSM 50701 / NCIMB 9529 / HD100).